Reading from the N-terminus, the 399-residue chain is Serine palmitoyltransferase (399 aa).

Residues 113–114 (GF), histidine 213, threonine 241, and serine 243 each bind pyridoxal 5'-phosphate. Position 244 is an N6-(pyridoxal phosphate)lysine (lysine 244).

Belongs to the class-II pyridoxal-phosphate-dependent aminotransferase family. In terms of assembly, homodimer. Requires pyridoxal 5'-phosphate as cofactor.

It is found in the cytoplasm. Its subcellular location is the cell inner membrane. It carries out the reaction L-serine + hexadecanoyl-CoA + H(+) = 3-oxosphinganine + CO2 + CoA. It functions in the pathway lipid metabolism; sphingolipid metabolism. Functionally, catalyzes the condensation of L-serine with palmitoyl-CoA (hexadecanoyl-CoA) to produce 3-oxosphinganine. Exhibits a broad substrate specificity concerning the chain length and the degree of unsaturation of acyl-CoA. The protein is Serine palmitoyltransferase of Sphingobacterium multivorum.